A 169-amino-acid polypeptide reads, in one-letter code: Putative hydrolase 111R (169 aa).

One can recognise a Nudix hydrolase domain in the interval 46-169 (FEKRKAGVFV…QKILMALSCN (124 aa)). A Nudix box motif is present at residues 76–98 (GHMEAYDHSPKTCAERELKEETG). Mg(2+) is bound by residues glutamate 92, glutamate 96, and aspartate 138.

It belongs to the Nudix hydrolase family. Mg(2+) is required as a cofactor. The cofactor is Mn(2+).

This chain is Putative hydrolase 111R, found in Aedes vexans (Inland floodwater mosquito).